Consider the following 69-residue polypeptide: Putative membrane protein insertion efficiency factor (69 aa).

This sequence belongs to the UPF0161 family.

It localises to the cell membrane. Could be involved in insertion of integral membrane proteins into the membrane. This chain is Putative membrane protein insertion efficiency factor, found in Thermomicrobium roseum (strain ATCC 27502 / DSM 5159 / P-2).